A 929-amino-acid polypeptide reads, in one-letter code: Protocadherin gamma-B7 (929 aa).

Residues Met-1 to Cys-30 form the signal peptide. 6 consecutive Cadherin domains span residues Glu-31–Phe-133, Arg-134–Phe-242, Ser-243–Ile-347, Ile-348–Phe-452, Gly-453–Val-562, and Asp-570–Phe-675. The Extracellular segment spans residues Glu-31 to Tyr-691. 2 N-linked (GlcNAc...) asparagine glycosylation sites follow: Asn-419 and Asn-545. A helical transmembrane segment spans residues Leu-692–Ala-712. The Cytoplasmic portion of the chain corresponds to Leu-713–Lys-929. 2 disordered regions span residues Gln-806–Asn-838 and Ala-899–Lys-929. Residues Ala-807 to Asn-838 are compositionally biased toward polar residues. Over residues Asn-919–Lys-929 the composition is skewed to basic residues.

It is found in the cell membrane. Functionally, potential calcium-dependent cell-adhesion protein. May be involved in the establishment and maintenance of specific neuronal connections in the brain. This chain is Protocadherin gamma-B7 (PCDHGB7), found in Homo sapiens (Human).